Reading from the N-terminus, the 273-residue chain is Zinc finger protein 80 (273 aa).

2 consecutive C2H2-type zinc fingers follow at residues 49 to 71 and 77 to 99; these read YKCKECGSVFNKNSLLVRHQQIH and YECQECGKAFPEKVDFVRPMRIH. The C2H2-type 3; atypical zinc finger occupies 105–127; the sequence is CKCVECGKVFNRRSHLLCYRQIH. 4 C2H2-type zinc fingers span residues 133-155, 161-183, 189-211, and 217-239; these read YECSECGKTFSYHSVFIQHRVTH, FGCKECGKTFYYNSSLTRHMKIH, CKCSECGKTFTYRSVFFRHSMTH, and YECKECGKGFYYSYSLTRHTRSH.

The protein belongs to the krueppel C2H2-type zinc-finger protein family.

The protein resides in the nucleus. Its function is as follows. May be involved in transcriptional regulation. The polypeptide is Zinc finger protein 80 (ZNF80) (Homo sapiens (Human)).